The chain runs to 302 residues: Heme A synthase (302 aa).

Residues 1 to 6 (MNKALK) lie on the Cytoplasmic side of the membrane. The helical transmembrane segment at 7–27 (GLGIITTIAMLFVLIGGALVT) threads the bilayer. Residues 28–61 (KTGSGMGCGRSWPLCNGSIFPALTLESIIEWSHR) lie on the Extracellular side of the membrane. A disulfide bridge links Cys-35 with Cys-42. Glu-57 is a catalytic residue. Residue His-60 participates in heme o binding. Residues 62 to 82 (FVSGTSGVLVLALAIWTWKKI) traverse the membrane as a helical segment. The Cytoplasmic segment spans residues 83–91 (GHIRETKFL). A helical transmembrane segment spans residues 92 to 112 (AVMSVVFLILQALLGAAAVVF). The Extracellular segment spans residues 113-120 (GSSALIMA). Residues 121-141 (LHFGISLISFASVLLLTLLVF) traverse the membrane as a helical segment. His-122 is a heme o binding site. The Cytoplasmic portion of the chain corresponds to 142–158 (EADSKQKSESFYIGKTM). Residues 159–179 (QFHMIGIIIYTYVVVYTGAYV) traverse the membrane as a helical segment. Residues 180-208 (RHTSSSLACLDFPMCSTENGWLPGKFHEW) lie on the Extracellular side of the membrane. Residues Cys-188 and Cys-194 are joined by a disulfide bond. The chain crosses the membrane as a helical span at residues 209–229 (VQMGHRAAALLLFAWIIAAAV). His-213 contacts heme b. The Cytoplasmic portion of the chain corresponds to 230-242 (HAARQYKNQKRIY). The chain crosses the membrane as a helical span at residues 243–263 (WGWMISLILIILQAASGIAVV). At 264–272 (YSRLDLGFA) the chain is on the extracellular side. A helical membrane pass occupies residues 273 to 293 (LAHAFFISCLFGILCYFLLLV). His-275 serves as a coordination point for heme b. At 294–302 (ARYRRQVQK) the chain is on the cytoplasmic side.

It belongs to the COX15/CtaA family. Type 1 subfamily. As to quaternary structure, interacts with CtaB. Heme b is required as a cofactor.

Its subcellular location is the cell membrane. The enzyme catalyses Fe(II)-heme o + 2 A + H2O = Fe(II)-heme a + 2 AH2. It participates in porphyrin-containing compound metabolism; heme A biosynthesis; heme A from heme O: step 1/1. Catalyzes the conversion of heme O to heme A by two successive hydroxylations of the methyl group at C8. The first hydroxylation forms heme I, the second hydroxylation results in an unstable dihydroxymethyl group, which spontaneously dehydrates, resulting in the formyl group of heme A. The polypeptide is Heme A synthase (Bacillus licheniformis (strain ATCC 14580 / DSM 13 / JCM 2505 / CCUG 7422 / NBRC 12200 / NCIMB 9375 / NCTC 10341 / NRRL NRS-1264 / Gibson 46)).